We begin with the raw amino-acid sequence, 419 residues long: UDP-N-acetylglucosamine 1-carboxyvinyltransferase (419 aa).

22–23 is a phosphoenolpyruvate binding site; the sequence is KN. Arg-93 contributes to the UDP-N-acetyl-alpha-D-glucosamine binding site. The Proton donor role is filled by Cys-117. Residue Cys-117 is modified to 2-(S-cysteinyl)pyruvic acid O-phosphothioketal. The UDP-N-acetyl-alpha-D-glucosamine site is built by Asp-307 and Ile-329.

This sequence belongs to the EPSP synthase family. MurA subfamily.

The protein resides in the cytoplasm. It carries out the reaction phosphoenolpyruvate + UDP-N-acetyl-alpha-D-glucosamine = UDP-N-acetyl-3-O-(1-carboxyvinyl)-alpha-D-glucosamine + phosphate. The protein operates within cell wall biogenesis; peptidoglycan biosynthesis. Its function is as follows. Cell wall formation. Adds enolpyruvyl to UDP-N-acetylglucosamine. This is UDP-N-acetylglucosamine 1-carboxyvinyltransferase from Shewanella sediminis (strain HAW-EB3).